The chain runs to 193 residues: MKSLIRPLVVLFVVLNAVTGLAYPAVMTVFGQAVFPSQANGSLIEQNGKVVGSALIGQPFDAPKYFWGRLSATAPMPYNAAGSGGSNLGPLNPSLADQVKARIAALRDAGTDLSKPVPVDLVTASASGLDPEITPAAAAYQVERVAKARNLTPDAVAQLVAANTTGRQFGVLGEPRVNVLKLNLALDAAQAAH.

The helical transmembrane segment at 7–27 threads the bilayer; it reads PLVVLFVVLNAVTGLAYPAVM.

This sequence belongs to the KdpC family. As to quaternary structure, the system is composed of three essential subunits: KdpA, KdpB and KdpC.

It localises to the cell inner membrane. Functionally, part of the high-affinity ATP-driven potassium transport (or Kdp) system, which catalyzes the hydrolysis of ATP coupled with the electrogenic transport of potassium into the cytoplasm. This subunit acts as a catalytic chaperone that increases the ATP-binding affinity of the ATP-hydrolyzing subunit KdpB by the formation of a transient KdpB/KdpC/ATP ternary complex. In Burkholderia cenocepacia (strain HI2424), this protein is Potassium-transporting ATPase KdpC subunit.